The chain runs to 276 residues: MLLRFTKMHGLGNDFMVIDLVTQHAHIQPKHAKQWGDRHTGIGFDQLLIVEPPSRPDVDFRYRIFNADGSEVEQCGNGARCFARFVLDKRLTVKKRIRVETRSGVIELDVRPDGQVCVDMGPPRLEPREIPFQAENAALDYQVEVDGCEVELAALSMGNPHAVLRVENVESAPVHELGPKLEHHPRFPQRVNVGFLQVVDRQHARLRVWERGAGETQACGTGACAAAVAAIRQGWMDSPVLVDLPGGRLSIAWAGPDQSVMMTGPAVRVYEGQVRL.

The substrate site is built by N13, Q46, and N66. The Proton donor role is filled by C75. Residues 76–77, N159, N192, and 210–211 contribute to the substrate site; these read GN and ER. C219 functions as the Proton acceptor in the catalytic mechanism. 220–221 serves as a coordination point for substrate; sequence GT.

Belongs to the diaminopimelate epimerase family. As to quaternary structure, homodimer.

It is found in the cytoplasm. It carries out the reaction (2S,6S)-2,6-diaminopimelate = meso-2,6-diaminopimelate. It participates in amino-acid biosynthesis; L-lysine biosynthesis via DAP pathway; DL-2,6-diaminopimelate from LL-2,6-diaminopimelate: step 1/1. In terms of biological role, catalyzes the stereoinversion of LL-2,6-diaminopimelate (L,L-DAP) to meso-diaminopimelate (meso-DAP), a precursor of L-lysine and an essential component of the bacterial peptidoglycan. The chain is Diaminopimelate epimerase from Azotobacter vinelandii (strain DJ / ATCC BAA-1303).